The chain runs to 116 residues: Large-conductance mechanosensitive channel (116 aa).

2 helical membrane passes run 7 to 27 (EFAL…GAAF) and 64 to 84 (GLFI…FIFV).

This sequence belongs to the MscL family. In terms of assembly, homopentamer.

It localises to the cell membrane. Functionally, channel that opens in response to stretch forces in the membrane lipid bilayer. May participate in the regulation of osmotic pressure changes within the cell. This Staphylococcus epidermidis (strain ATCC 35984 / DSM 28319 / BCRC 17069 / CCUG 31568 / BM 3577 / RP62A) protein is Large-conductance mechanosensitive channel.